The following is a 563-amino-acid chain: 4-hydroxy-7-methoxy-3-oxo-3,4-dihydro-2H-1,4-benzoxazin-2-yl glucoside beta-D-glucosidase 2, chloroplastic (563 aa).

The N-terminal 51 residues, 1–51 (MAPLLAAAMNHAAHPVLRSHLGPNNESFSRHHLSSSPQSSKRRFNLSFTPR), are a transit peptide targeting the chloroplast. The tract at residues 17–43 (LRSHLGPNNESFSRHHLSSSPQSSKRR) is disordered. Residues Gln-89, His-193, and 241 to 242 (NE) each bind a beta-D-glucoside. Glu-242 acts as the Proton donor in catalysis. Cys-261 and Cys-267 are joined by a disulfide. Residues 322–358 (SFLDEQAKERSMDINLGWFLEPVVRGDYPFSMRSLAR) are dimerization. Position 384 (Tyr-384) interacts with a beta-D-glucoside. 2 dimerization regions span residues 391 to 402 (HIDISPKYSPVL) and 447 to 450 (KYGN). Residues Glu-457, Trp-508, 515 to 516 (EW), and Tyr-524 each bind a beta-D-glucoside. Glu-457 serves as the catalytic Nucleophile.

The protein belongs to the glycosyl hydrolase 1 family. As to quaternary structure, homo- and heterodimer. In terms of tissue distribution, expressed in leaves only starting at day 6 after germination.

The protein resides in the plastid. The protein localises to the chloroplast. It carries out the reaction Hydrolysis of terminal, non-reducing beta-D-glucosyl residues with release of beta-D-glucose.. The catalysed reaction is DIMBOA beta-D-glucoside + H2O = DIMBOA + D-glucose. The enzyme catalyses DIBOA beta-D-glucoside + H2O = DIBOA + D-glucose. Its function is as follows. Beta-glucosidase acting poorly on artificial aryl beta-glucosides. Has no activity toward the chromogenic substrate 6-bromo-2-naphthyl-beta-D-glucoside (6BNGlc). This is 4-hydroxy-7-methoxy-3-oxo-3,4-dihydro-2H-1,4-benzoxazin-2-yl glucoside beta-D-glucosidase 2, chloroplastic (GLU2) from Zea mays (Maize).